A 440-amino-acid chain; its full sequence is Transposon Ty1-ER2 Gag polyprotein (440 aa).

Composition is skewed to polar residues over residues 1–10, 48–60, and 127–152; these read MESQQLSNYP, TKAN…TPAS, and QSQF…GNTF. Disordered stretches follow at residues 1–93, 126–173, and 352–440; these read MESQ…MMTQ, PQSQ…RPPP, and GSRN…PETY. The segment covering 153–165 has biased composition (low complexity); sequence TDSSSADSDMTST. Residues 299–401 form an RNA-binding region; sequence NNGIHINNKV…NSKSKTARAH (103 aa). Residues 402–418 show a composition bias toward low complexity; that stretch reads NVSTSNNSPSTDNDSIS. At S416 the chain carries Phosphoserine. Over residues 419–428 the composition is skewed to polar residues; the sequence is KSTTEPIQLN. Residues 429–440 show a composition bias toward basic and acidic residues; it reads NKHDLHLRPETY.

As to quaternary structure, homotrimer.

It localises to the cytoplasm. Functionally, capsid protein (CA) is the structural component of the virus-like particle (VLP), forming the shell that encapsulates the retrotransposons dimeric RNA genome. The particles are assembled from trimer-clustered units and there are holes in the capsid shells that allow for the diffusion of macromolecules. CA also has nucleocapsid-like chaperone activity, promoting primer tRNA(i)-Met annealing to the multipartite primer-binding site (PBS), dimerization of Ty1 RNA and initiation of reverse transcription. This chain is Transposon Ty1-ER2 Gag polyprotein (TY1A-ER2), found in Saccharomyces cerevisiae (strain ATCC 204508 / S288c) (Baker's yeast).